A 545-amino-acid polypeptide reads, in one-letter code: La-related protein 6B (545 aa).

Residues 1 to 10 (MADQQTLDSS) are compositionally biased toward polar residues. Disordered stretches follow at residues 1-76 (MADQ…IPPP), 105-187 (LVPV…DSKT), and 382-545 (HQTK…VQAE). Low complexity predominate over residues 23 to 49 (SHSTSSTTSASSSSDPSLLRSLSLSRL). Pro residues predominate over residues 61–76 (TTPPLPQPPRMIIPPP). Residues 111–126 (HHPHHRFHQHHHHNRH) show a composition bias toward basic residues. Basic and acidic residues predominate over residues 154–173 (LVSKKNDRRDHSKRESKNDQ). The segment covering 174–185 (VTETGASVSIDS) has biased composition (polar residues). An HTH La-type RNA-binding domain is found at 187–278 (TGLPEDSIQK…RRISPITESA (92 aa)). One can recognise an RRM domain in the interval 285-383 (RIIVAENLPE…LKVRLMLKHQ (99 aa)). Residues 448-464 (GQRKGRNRGRGKGRGRG) show a composition bias toward basic residues. Low complexity predominate over residues 465-478 (QPHQNQNQNNNHSH). The segment covering 479-497 (NQNHNHNGRGNHHHHHHHQ) has biased composition (basic residues). Positions 498 to 509 (VGTQPSNNPMNN) are enriched in polar residues. A compositionally biased stretch (low complexity) spans 510 to 519 (MEQPGMGKQQ).

The protein localises to the nucleus. Transcriptional regulator. In Arabidopsis thaliana (Mouse-ear cress), this protein is La-related protein 6B (LARP6B).